Here is a 400-residue protein sequence, read N- to C-terminus: MVESSRWYSVPETLSAKAGLPIVSLPFNNQIQTSPFSVRSSYYLPLQTVNMSPSLVAPRQKALSLRHPTMAGKEYLEEFSKKYIIDVLDVPNREEWLKQLPKKVAKDGPYSALIIGMGTGPYEPFDAEFCQALLPDLKLVVSASAGYNEFDVSWMTENNIWFCNTVDAVSEATADMAIFLTLAALRDTTNAERSARAGNWKAGFVPCRDPTGLRLGIIGMGAIGKHIARKAAVFNLEIVYHNRKRLQEADETTYKATYCPTLASLLETSDIVSISVPLNDETTGMISESEIALMKDSSILINTARGAVVDEAALIEALESGKIWRAGLDVFCNEPDINPYFKTSDKVVVQPHLGGLTAVAFRKAYRECFENVASFFDTGKPLAPVNDVTRAKGTPTASLP.

NAD(+)-binding positions include 222–223, 303–305, and Asp329; these read AI and TAR. Arg305 is a catalytic residue. The active site involves Glu334. The active-site Proton donor is His352. 352-355 serves as a coordination point for NAD(+); the sequence is HLGG.

It belongs to the D-isomer specific 2-hydroxyacid dehydrogenase family.

The protein operates within secondary metabolite biosynthesis; terpenoid biosynthesis. In terms of biological role, dehydrogenase; part of the gene cluster that mediates the biosynthesis of enfumafungin, a glycosylated fernene-type triterpenoid with potent antifungal activity, mediated by its interaction with beta-1,3-glucan synthase and the fungal cell wall. The pathway begins with the terpene cyclase-glycosyl transferase fusion protein that most likely uses 2,3-oxidosqualene as substrate and catalyzes glycosylation immediately after cyclization. The fernene glycoside then could be processed by the desaturase efuI which catalyzes isomerization of a double bond established by efuA to form the core structure. The latter would then undergo a series of hydroxylations in unknown order at C-2, C-19, C-23 and C-25, which would be catalyzed by two of the three cytochrome P450 monooxygenases efuB, efuG or efuH. The hydroxy-group at C-25 becomes oxidized by the dehydrogenase efuE to enable a spontaneous, non-enzymatic hemiacetal formation with C-23. After hydroxylation at C-2, acetylation by the acetyltransferase efuC takes place. The final steps in enfumafungin biosynthesis require expansion of the 5-membered ring by lactonization via a Baeyer-Villiger reaction mediated by one of the BGC's cytochrome P450 monooxygenases (efuB, efuG or efuH) followed by ring cleavage. This type of reaction would establish a double bond between C-20 and C-21 which could be reduced by the reductase efuL to form the final product. This chain is Dehydrogenase efuE, found in Hormonema carpetanum.